The primary structure comprises 516 residues: Solute carrier family 49 member A3 (516 aa).

Over residues 1–10 (MAGTMDRLED) the composition is skewed to basic and acidic residues. The interval 1–22 (MAGTMDRLEDCNSPETSGTAGD) is disordered. 12 helical membrane passes run 34 to 54 (WVFL…WLSF), 74 to 94 (WLSL…IWVL), 104 to 124 (ILGA…CLPV), 139 to 159 (LCAL…ALWF), 170 to 190 (ISTM…PALV), 199 to 219 (MLGI…VCLW), 253 to 273 (VLLA…SALL), 289 to 309 (LCGA…GLYV), 321 to 341 (IGLC…QLQG), 344 to 364 (LALA…APVV), 382 to 402 (GLIF…LTAL), and 425 to 445 (VSLL…VIFF). The segment at 453–516 (EAESGGSSSP…EWAETMPRDV (64 aa)) is disordered. Positions 504-516 (GHSEWAETMPRDV) are enriched in basic and acidic residues.

This sequence belongs to the major facilitator superfamily.

It is found in the membrane. This is Solute carrier family 49 member A3 (Slc49a3) from Mus musculus (Mouse).